The primary structure comprises 482 residues: UDP-N-acetylmuramate--L-alanine ligase (482 aa).

129–135 (GTHGKTT) serves as a coordination point for ATP.

The protein belongs to the MurCDEF family.

Its subcellular location is the cytoplasm. The catalysed reaction is UDP-N-acetyl-alpha-D-muramate + L-alanine + ATP = UDP-N-acetyl-alpha-D-muramoyl-L-alanine + ADP + phosphate + H(+). It participates in cell wall biogenesis; peptidoglycan biosynthesis. In terms of biological role, cell wall formation. This Acinetobacter baumannii (strain SDF) protein is UDP-N-acetylmuramate--L-alanine ligase.